A 156-amino-acid chain; its full sequence is UPF0460 protein in nifX 3'region (156 aa).

It belongs to the UPF0460 family.

The protein is UPF0460 protein in nifX 3'region of Rhodobacter capsulatus (Rhodopseudomonas capsulata).